A 386-amino-acid polypeptide reads, in one-letter code: Succinate--CoA ligase [ADP-forming] subunit beta (386 aa).

The 236-residue stretch at 9–244 folds into the ATP-grasp domain; it reads KEILRKYGVP…HDEEDPLETR (236 aa). ATP-binding positions include lysine 46, 53–55, glutamate 99, cysteine 102, and glutamate 107; that span reads GRG. 2 residues coordinate Mg(2+): asparagine 199 and aspartate 213. Substrate contacts are provided by residues asparagine 264 and 321 to 323; that span reads GIM.

The protein belongs to the succinate/malate CoA ligase beta subunit family. Heterotetramer of two alpha and two beta subunits. The cofactor is Mg(2+).

It carries out the reaction succinate + ATP + CoA = succinyl-CoA + ADP + phosphate. The catalysed reaction is GTP + succinate + CoA = succinyl-CoA + GDP + phosphate. Its pathway is carbohydrate metabolism; tricarboxylic acid cycle; succinate from succinyl-CoA (ligase route): step 1/1. In terms of biological role, succinyl-CoA synthetase functions in the citric acid cycle (TCA), coupling the hydrolysis of succinyl-CoA to the synthesis of either ATP or GTP and thus represents the only step of substrate-level phosphorylation in the TCA. The beta subunit provides nucleotide specificity of the enzyme and binds the substrate succinate, while the binding sites for coenzyme A and phosphate are found in the alpha subunit. The protein is Succinate--CoA ligase [ADP-forming] subunit beta of Rickettsia massiliae (strain Mtu5).